The following is a 105-amino-acid chain: Large ribosomal subunit protein bL21 (105 aa).

It belongs to the bacterial ribosomal protein bL21 family. In terms of assembly, part of the 50S ribosomal subunit. Contacts protein L20.

Functionally, this protein binds to 23S rRNA in the presence of protein L20. The protein is Large ribosomal subunit protein bL21 of Stenotrophomonas maltophilia (strain R551-3).